The chain runs to 67 residues: Small ribosomal subunit protein bS21 (67 aa).

This sequence belongs to the bacterial ribosomal protein bS21 family.

The chain is Small ribosomal subunit protein bS21 from Oleidesulfovibrio alaskensis (strain ATCC BAA-1058 / DSM 17464 / G20) (Desulfovibrio alaskensis).